The primary structure comprises 60 residues: UPF0337 protein SACOL1680 (60 aa).

Belongs to the UPF0337 (CsbD) family.

This chain is UPF0337 protein SACOL1680, found in Staphylococcus aureus (strain COL).